Reading from the N-terminus, the 164-residue chain is RNA pyrophosphohydrolase (164 aa).

In terms of domain architecture, Nudix hydrolase spans 12-158; it reads RYRQCAGVML…KREVYRAVVK (147 aa). Residues 47 to 68 carry the Nudix box motif; the sequence is GGIDPGETQQEAAMRELEEETG.

Belongs to the Nudix hydrolase family. RppH subfamily. Requires a divalent metal cation as cofactor.

Its function is as follows. Accelerates the degradation of transcripts by removing pyrophosphate from the 5'-end of triphosphorylated RNA, leading to a more labile monophosphorylated state that can stimulate subsequent ribonuclease cleavage. The sequence is that of RNA pyrophosphohydrolase from Erythrobacter litoralis (strain HTCC2594).